The chain runs to 401 residues: Tyrosine--tRNA ligase (401 aa).

The short motif at 42-51 (PTAPDLHLGH) is the 'HIGH' region element. The 'KMSKS' region signature appears at 226–230 (KMSKS). Position 229 (lysine 229) interacts with ATP. One can recognise an S4 RNA-binding domain in the interval 336–397 (IALAQLLKQI…GKRRIAKLSI (62 aa)).

This sequence belongs to the class-I aminoacyl-tRNA synthetase family. TyrS type 2 subfamily. Homodimer.

It localises to the cytoplasm. The enzyme catalyses tRNA(Tyr) + L-tyrosine + ATP = L-tyrosyl-tRNA(Tyr) + AMP + diphosphate + H(+). Catalyzes the attachment of tyrosine to tRNA(Tyr) in a two-step reaction: tyrosine is first activated by ATP to form Tyr-AMP and then transferred to the acceptor end of tRNA(Tyr). In Legionella pneumophila (strain Paris), this protein is Tyrosine--tRNA ligase.